We begin with the raw amino-acid sequence, 732 residues long: MVRSGNKAAVVLCMDVGFTMSNSIPGIESPFEQAKKVITMFVQRQVFAENKDEIALVLFGTDGTDNPLSGGDQYQNITVHRHLMLPDFDLLEDIESKIQPGSQQADFLDALIVSMDVIQHETIGKKFEKRHIEIFTDLSSRFSKSQLDIIIHSLKKCDISLQFFLPFSLGKEDGSGDRGDGPFRLGGHGPSFPLKGITEQQKEGLEIVKMVMISLEGEDGLDEIYSFSESLRKLCVFKKIERHSIHWPCRLTIGSNLSIRIAAYKSILQERVKKTWTVVDAKTLKKEDIQKETVYCLNDDDETEVLKEDIIQGFRYGSDIVPFSKVDEEQMKYKSEGKCFSVLGFCKSSQVQRRFFMGNQVLKVFAARDDEAAAVALSSLIHALDDLDMVAIVRYAYDKRANPQVGVAFPHIKHNYECLVYVQLPFMEDLRQYMFSSLKNSKKYAPTEAQLNAVDALIDSMSLAKKDEKTDTLEDLFPTTKIPNPRFQRLFQCLLHRALHPREPLPPIQQHIWNMLNPPAEVTTKSQIPLSKIKTLFPLIEAKKKDQVTAQEIFQDNHEDGPTAKKLKTEQGGAHFSVSSLAEGSVTSVGSVNPAENFRVLVKQKKASFEEASNQLINHIEQFLDTNETPYFMKSIDCIRAFREEAIKFSEEQRFNNFLKALQEKVEIKQLNHFWEIVVQDGITLITKEEASGSSVTAEEAKKFLAPKDKPSGDTAAVFEEGGDVDDLLDMI.

The 223-residue stretch at 9-231 (AVVLCMDVGF…DEIYSFSESL (223 aa)) folds into the VWFA domain. The leucine-zipper stretch occupies residues 138–165 (LSSRFSKSQLDIIIHSLKKCDISLQFFL). The residue at position 144 (Lys-144) is an N6-acetyllysine. Lys-195 participates in a covalent cross-link: Glycyl lysine isopeptide (Lys-Gly) (interchain with G-Cter in SUMO2). The 200-residue stretch at 253-452 (IGSNLSIRIA…KYAPTEAQLN (200 aa)) folds into the Ku domain. 2 positions are modified to phosphoserine: Ser-255 and Ser-258. An N6-acetyllysine modification is found at Lys-265. At Ser-318 the chain carries Phosphoserine. An N6-acetyllysine modification is found at Lys-332. Residues Lys-532 and Lys-534 each participate in a glycyl lysine isopeptide (Lys-Gly) (interchain with G-Cter in SUMO2) cross-link. Position 535 is a phosphothreonine (Thr-535). Glycyl lysine isopeptide (Lys-Gly) (interchain with G-Cter in SUMO2) cross-links involve residues Lys-566 and Lys-568. 3 positions are modified to phosphoserine; by PRKDC: Ser-577, Ser-579, and Ser-580. An N6-acetyllysine mark is found at Lys-660 and Lys-665. Residues Lys-669 and Lys-688 each participate in a glycyl lysine isopeptide (Lys-Gly) (interchain with G-Cter in SUMO2) cross-link. Thr-715 bears the Phosphothreonine; by PRKDC mark. Positions 720–728 (EEGGDVDDL) match the EEXXXDL motif motif.

It belongs to the ku80 family. In terms of assembly, heterodimer composed of XRCC5/Ku80 and XRCC6/Ku70; heterodimerization stabilizes XRCC5 protein. Component of the core long-range non-homologous end joining (NHEJ) complex (also named DNA-PK complex) composed of PRKDC, LIG4, XRCC4, XRCC6/Ku70, XRCC5/Ku86 and NHEJ1/XLF. Additional component of the NHEJ complex includes PAXX. Following autophosphorylation, PRKDC dissociates from DNA, leading to formation of the short-range NHEJ complex, composed of LIG4, XRCC4, XRCC6/Ku70, XRCC5/Ku86 and NHEJ1/XLF. The XRCC5-XRCC6 dimer also associates with NAA15, and this complex displays DNA binding activity towards the osteocalcin FGF response element (OCFRE). In addition, XRCC5 binds to the osteoblast-specific transcription factors MSX2 and RUNX2. Interacts with ELF3. Interacts with APLF (via KBM motif). The XRCC5/XRCC6 dimer associates in a DNA-dependent manner with APEX1. Identified in a complex with DEAF1 and XRCC6. Interacts with NR4A3; the DNA-dependent protein kinase complex DNA-PK phosphorylates and activates NR4A3 and prevents NR4A3 ubiquitinylation and degradation. Interacts with RNF138. Interacts with CYREN isoform 1 (CYREN-1) and isoform 4 (CYREN-2) (via KBM motif). Interacts with WRN (via KBM motif). Interacts (via N-terminus) with HSF1 (via N-terminus); this interaction is direct and prevents XRCC5/XRCC6 heterodimeric binding and non-homologous end joining (NHEJ) repair activities induced by ionizing radiation (IR). Interacts with DHX9; this interaction occurs in a RNA-dependent manner. Part of the HDP-RNP complex composed of at least HEXIM1, PRKDC, XRCC5, XRCC6, paraspeckle proteins (SFPQ, NONO, PSPC1, RBM14, and MATR3) and NEAT1 RNA. Interacts with ERCC6. The XRCC5-XRCC6 dimer associates with ALKBH2. Interacts with TPRN; TPRN interacts with a number of DNA damage response proteins, is recruited to sites of DNA damage and may play a role in DNA damage repair. Interacts with ERCC6L2. (Microbial infection) Interacts with human T-cell leukemia virus 1/HTLV-1 protein HBZ. ADP-ribosylated by PARP3. In terms of processing, phosphorylated on serine residues. Phosphorylation by PRKDC may enhance helicase activity. Post-translationally, sumoylated. Ubiquitinated by RNF8 via 'Lys-48'-linked ubiquitination following DNA damage, leading to its degradation and removal from DNA damage sites. Ubiquitinated by RNF138, leading to remove the Ku complex from DNA breaks.

The protein localises to the nucleus. Its subcellular location is the nucleolus. It is found in the chromosome. Functionally, single-stranded DNA-dependent ATP-dependent helicase that plays a key role in DNA non-homologous end joining (NHEJ) by recruiting DNA-PK to DNA. Required for double-strand break repair and V(D)J recombination. Also has a role in chromosome translocation. The DNA helicase II complex binds preferentially to fork-like ends of double-stranded DNA in a cell cycle-dependent manner. It works in the 3'-5' direction. During NHEJ, the XRCC5-XRRC6 dimer performs the recognition step: it recognizes and binds to the broken ends of the DNA and protects them from further resection. Binding to DNA may be mediated by XRCC6. The XRCC5-XRRC6 dimer acts as a regulatory subunit of the DNA-dependent protein kinase complex DNA-PK by increasing the affinity of the catalytic subunit PRKDC to DNA by 100-fold. The XRCC5-XRRC6 dimer is probably involved in stabilizing broken DNA ends and bringing them together. The assembly of the DNA-PK complex to DNA ends is required for the NHEJ ligation step. The XRCC5-XRRC6 dimer probably also acts as a 5'-deoxyribose-5-phosphate lyase (5'-dRP lyase), by catalyzing the beta-elimination of the 5' deoxyribose-5-phosphate at an abasic site near double-strand breaks. XRCC5 probably acts as the catalytic subunit of 5'-dRP activity, and allows to 'clean' the termini of abasic sites, a class of nucleotide damage commonly associated with strand breaks, before such broken ends can be joined. The XRCC5-XRRC6 dimer together with APEX1 acts as a negative regulator of transcription. In association with NAA15, the XRCC5-XRRC6 dimer binds to the osteocalcin promoter and activates osteocalcin expression. As part of the DNA-PK complex, involved in the early steps of ribosome assembly by promoting the processing of precursor rRNA into mature 18S rRNA in the small-subunit processome. Binding to U3 small nucleolar RNA, recruits PRKDC and XRCC5/Ku86 to the small-subunit processome. Plays a role in the regulation of DNA virus-mediated innate immune response by assembling into the HDP-RNP complex, a complex that serves as a platform for IRF3 phosphorylation and subsequent innate immune response activation through the cGAS-STING pathway. This Homo sapiens (Human) protein is X-ray repair cross-complementing protein 5 (XRCC5).